Reading from the N-terminus, the 427-residue chain is MESLTLQPISKIDGQINLPGSKSVSNRALLLAALASGKTTLTNLLDSDDIRHMLNALKALGVDYKLSEDKTVCEVNGLGQAFKSTTEALELFLGNAGTAMRPLAAALCLGEGEFILTGEPRMKERPIGHLVTALKAAGADVEYLENENYPPLKIKGTGLKGGNVDIDGSISSQFLTAFLMAAPLSSQETTINIVGDLVSKPYIDITLDIMATFGVVIENKEYKTFVVPANQSYIAPGEFLVEGDASSASYFLAAAAIKGGSVKVTGIGKKSIQGDVQFADALAAMGAEIEWGDDYVIAHKGELNAIDMDFNHIPDAAMTIATTALFAKGTTSIRNVYNWRVKETDRLAAMATELRKVGAEVEEGEDYITITPPAMLRHATIDTYDDHRMAMCFSLVALSDTPVTINDPGCTSKTFPDYFDKLKELSV.

The 3-phosphoshikimate site is built by Lys-22, Ser-23, and Arg-27. Residue Lys-22 coordinates phosphoenolpyruvate. Residues Gly-97 and Arg-125 each coordinate phosphoenolpyruvate. Residues Ser-171, Ser-172, Gln-173, Ser-199, Asp-315, Asn-338, and Lys-342 each contribute to the 3-phosphoshikimate site. A phosphoenolpyruvate-binding site is contributed by Gln-173. Asp-315 acts as the Proton acceptor in catalysis. The phosphoenolpyruvate site is built by Arg-346, Arg-388, and Lys-413.

It belongs to the EPSP synthase family. As to quaternary structure, monomer.

The protein resides in the cytoplasm. The catalysed reaction is 3-phosphoshikimate + phosphoenolpyruvate = 5-O-(1-carboxyvinyl)-3-phosphoshikimate + phosphate. It functions in the pathway metabolic intermediate biosynthesis; chorismate biosynthesis; chorismate from D-erythrose 4-phosphate and phosphoenolpyruvate: step 6/7. Catalyzes the transfer of the enolpyruvyl moiety of phosphoenolpyruvate (PEP) to the 5-hydroxyl of shikimate-3-phosphate (S3P) to produce enolpyruvyl shikimate-3-phosphate and inorganic phosphate. This chain is 3-phosphoshikimate 1-carboxyvinyltransferase, found in Aliivibrio salmonicida (strain LFI1238) (Vibrio salmonicida (strain LFI1238)).